A 104-amino-acid chain; its full sequence is L-rhamnose mutarotase (104 aa).

Tyrosine 18 lines the substrate pocket. The active-site Proton donor is the histidine 22. Substrate-binding positions include tyrosine 41 and 76–77 (WW).

Belongs to the rhamnose mutarotase family. As to quaternary structure, homodimer.

The protein resides in the cytoplasm. It carries out the reaction alpha-L-rhamnose = beta-L-rhamnose. Its pathway is carbohydrate metabolism; L-rhamnose metabolism. Involved in the anomeric conversion of L-rhamnose. The sequence is that of L-rhamnose mutarotase from Clostridium beijerinckii (strain ATCC 51743 / NCIMB 8052) (Clostridium acetobutylicum).